The primary structure comprises 430 residues: Glutamate-1-semialdehyde 2,1-aminomutase (430 aa).

Position 265 is an N6-(pyridoxal phosphate)lysine (Lys265).

It belongs to the class-III pyridoxal-phosphate-dependent aminotransferase family. HemL subfamily. Homodimer. The cofactor is pyridoxal 5'-phosphate.

Its subcellular location is the cytoplasm. The enzyme catalyses (S)-4-amino-5-oxopentanoate = 5-aminolevulinate. It participates in porphyrin-containing compound metabolism; protoporphyrin-IX biosynthesis; 5-aminolevulinate from L-glutamyl-tRNA(Glu): step 2/2. The polypeptide is Glutamate-1-semialdehyde 2,1-aminomutase (Shewanella oneidensis (strain ATCC 700550 / JCM 31522 / CIP 106686 / LMG 19005 / NCIMB 14063 / MR-1)).